Here is a 237-residue protein sequence, read N- to C-terminus: Ubiquinone biosynthesis O-methyltransferase (237 aa).

Residues Arg-38, Gly-58, Asp-79, and Met-124 each contribute to the S-adenosyl-L-methionine site.

Belongs to the methyltransferase superfamily. UbiG/COQ3 family.

The enzyme catalyses a 3-demethylubiquinol + S-adenosyl-L-methionine = a ubiquinol + S-adenosyl-L-homocysteine + H(+). The catalysed reaction is a 3-(all-trans-polyprenyl)benzene-1,2-diol + S-adenosyl-L-methionine = a 2-methoxy-6-(all-trans-polyprenyl)phenol + S-adenosyl-L-homocysteine + H(+). It participates in cofactor biosynthesis; ubiquinone biosynthesis. Its function is as follows. O-methyltransferase that catalyzes the 2 O-methylation steps in the ubiquinone biosynthetic pathway. This Acinetobacter baumannii (strain SDF) protein is Ubiquinone biosynthesis O-methyltransferase.